The sequence spans 165 residues: UPF0303 protein ACP_1015 (165 aa).

It belongs to the UPF0303 family.

The polypeptide is UPF0303 protein ACP_1015 (Acidobacterium capsulatum (strain ATCC 51196 / DSM 11244 / BCRC 80197 / JCM 7670 / NBRC 15755 / NCIMB 13165 / 161)).